A 420-amino-acid chain; its full sequence is UDP-N-acetylglucosamine 1-carboxyvinyltransferase (420 aa).

A phosphoenolpyruvate-binding site is contributed by 22 to 23 (KN). Residue Arg-93 coordinates UDP-N-acetyl-alpha-D-glucosamine. Cys-117 (proton donor) is an active-site residue. Cys-117 carries the post-translational modification 2-(S-cysteinyl)pyruvic acid O-phosphothioketal. 2 residues coordinate UDP-N-acetyl-alpha-D-glucosamine: Asp-307 and Ile-329.

The protein belongs to the EPSP synthase family. MurA subfamily.

The protein localises to the cytoplasm. The catalysed reaction is phosphoenolpyruvate + UDP-N-acetyl-alpha-D-glucosamine = UDP-N-acetyl-3-O-(1-carboxyvinyl)-alpha-D-glucosamine + phosphate. It participates in cell wall biogenesis; peptidoglycan biosynthesis. Cell wall formation. Adds enolpyruvyl to UDP-N-acetylglucosamine. The protein is UDP-N-acetylglucosamine 1-carboxyvinyltransferase of Shewanella pealeana (strain ATCC 700345 / ANG-SQ1).